The sequence spans 476 residues: Aspartyl/glutamyl-tRNA(Asn/Gln) amidotransferase subunit B (476 aa).

The protein belongs to the GatB/GatE family. GatB subfamily. Heterotrimer of A, B and C subunits.

The enzyme catalyses L-glutamyl-tRNA(Gln) + L-glutamine + ATP + H2O = L-glutaminyl-tRNA(Gln) + L-glutamate + ADP + phosphate + H(+). It carries out the reaction L-aspartyl-tRNA(Asn) + L-glutamine + ATP + H2O = L-asparaginyl-tRNA(Asn) + L-glutamate + ADP + phosphate + 2 H(+). Its function is as follows. Allows the formation of correctly charged Asn-tRNA(Asn) or Gln-tRNA(Gln) through the transamidation of misacylated Asp-tRNA(Asn) or Glu-tRNA(Gln) in organisms which lack either or both of asparaginyl-tRNA or glutaminyl-tRNA synthetases. The reaction takes place in the presence of glutamine and ATP through an activated phospho-Asp-tRNA(Asn) or phospho-Glu-tRNA(Gln). The sequence is that of Aspartyl/glutamyl-tRNA(Asn/Gln) amidotransferase subunit B from Neisseria meningitidis serogroup C / serotype 2a (strain ATCC 700532 / DSM 15464 / FAM18).